The chain runs to 345 residues: Eukaryotic translation initiation factor 3 subunit F (345 aa).

Positions 30-166 (VVIQPQALFS…TRAYISAPVG (137 aa)) constitute an MPN domain. The segment at 308-345 (GGESGSTESGQRGGQRGGKGGRGGQQRNQERSGEEVRA) is disordered. Positions 318 to 331 (QRGGQRGGKGGRGG) are enriched in gly residues. The span at 335–345 (NQERSGEEVRA) shows a compositional bias: basic and acidic residues.

It belongs to the eIF-3 subunit F family. In terms of assembly, component of the eukaryotic translation initiation factor 3 (eIF-3) complex.

It is found in the cytoplasm. In terms of biological role, component of the eukaryotic translation initiation factor 3 (eIF-3) complex, which is involved in protein synthesis of a specialized repertoire of mRNAs and, together with other initiation factors, stimulates binding of mRNA and methionyl-tRNAi to the 40S ribosome. The eIF-3 complex specifically targets and initiates translation of a subset of mRNAs involved in cell proliferation. This chain is Eukaryotic translation initiation factor 3 subunit F, found in Aspergillus terreus (strain NIH 2624 / FGSC A1156).